We begin with the raw amino-acid sequence, 745 residues long: 5-methyltetrahydropteroyltriglutamate--homocysteine methyltransferase (745 aa).

Residues 16 to 19 (REWK) and lysine 110 each bind 5-methyltetrahydropteroyltri-L-glutamate. Residues 420–422 (IGS) and glutamate 473 contribute to the L-homocysteine site. L-methionine is bound by residues 420–422 (IGS) and glutamate 473. Tryptophan 550 contributes to the 5-methyltetrahydropteroyltri-L-glutamate binding site. Aspartate 588 is an L-homocysteine binding site. An L-methionine-binding site is contributed by aspartate 588. Glutamate 594 provides a ligand contact to 5-methyltetrahydropteroyltri-L-glutamate. Residues histidine 630, cysteine 632, and glutamate 654 each coordinate Zn(2+). Histidine 683 (proton donor) is an active-site residue. Cysteine 715 provides a ligand contact to Zn(2+).

The protein belongs to the vitamin-B12 independent methionine synthase family. Zn(2+) serves as cofactor.

It carries out the reaction 5-methyltetrahydropteroyltri-L-glutamate + L-homocysteine = tetrahydropteroyltri-L-glutamate + L-methionine. It participates in amino-acid biosynthesis; L-methionine biosynthesis via de novo pathway; L-methionine from L-homocysteine (MetE route): step 1/1. Its function is as follows. Catalyzes the transfer of a methyl group from 5-methyltetrahydrofolate to homocysteine resulting in methionine formation. This chain is 5-methyltetrahydropteroyltriglutamate--homocysteine methyltransferase, found in Streptococcus agalactiae serotype III (strain NEM316).